A 720-amino-acid polypeptide reads, in one-letter code: MAEKFESLMNIHGFDLGSRYMDLKPLGCGGNGLVFSAVDNDCDKRVAIKKIVLTDPQSVKHALREIKIIRRLDHDNIVKVFEILGPSGSQLTDDVGSLTELNSVYIVQEYMETDLANVLEQGPLLEEHARLFMYQLLRGLKYIHSANVLHRDLKPANLFINTEDLVLKIGDFGLARIMDPHYSHKGHLSEGLVTKWYRSPRLLLSPNNYTKAIDMWAAGCIFAEMLTGKTLFAGAHELEQMQLILESIPVVHEEDRQELLSVIPVYIRNDMTEPHKPLTQLLPGISREALDFLEQILTFSPMDRLTAEEALSHPYMSIYSFPTDEPISSHPFHIEDEVDDILLMDETHSHIYNWERYHDCQFSEHDWPIHNNFDIDEVQLDPRALSDVTDEEEVQVDPRKYLDGDREKYLEDPAFDTSYSAEPCWQYPDHHENKYCDLECSHTCNYKTRSPSYLDNLVWRESEVNHYYEPKLIIDLSNWKEQSKDKSDKRGKSKCERNGLVKAQIALEEASQQLAERERGQGFDFDAFIAGTVQLSAQRESADVVDKLNDLNSSVSQLEMKSLISKSVSREKQEKGRANLAQLGALYQPSWESQFVSGGEECFLISQFCCEVRKDEHVEKENTYTSYLDKFFSRKEDSEMLETEPVEEGKRGERGREAGLLSSGGEFLLSRQLESIGTPQFHSPGGSPLKSIQATLTPSAMKSSPQIPHKTYSNILKHLN.

M1 is covalently cross-linked (Peptide (Met-Gly) (interchain with G-Cter in ubiquitin)). The Protein kinase domain occupies 20-316 (YMDLKPLGCG…AEEALSHPYM (297 aa)). Residues 26 to 34 (LGCGGNGLV) and K49 contribute to the ATP site. D152 acts as the Proton acceptor in catalysis. The residue at position 189 (S189) is a Phosphoserine; by PAK1, PAK2 and PAK3. Residues 189–191 (SEG) carry the SEG motif motif. Positions 332-337 (FHIEDE) match the FRIEDE motif motif. Phosphoserine occurs at positions 386, 452, 554, and 556. The segment at 638-657 (SEMLETEPVEEGKRGERGRE) is disordered. Positions 647-657 (EEGKRGERGRE) are enriched in basic and acidic residues. S683 is modified (phosphoserine). Polar residues predominate over residues 698-714 (PSAMKSSPQIPHKTYSN). The disordered stretch occupies residues 698-720 (PSAMKSSPQIPHKTYSNILKHLN).

Belongs to the protein kinase superfamily. CMGC Ser/Thr protein kinase family. MAP kinase subfamily. In terms of assembly, heterodimer with ERK4/MAPK4. Interacts with (via FRIEDE motif) MAPKAPK5. Interacts with UBE3A; this interaction may be indirect and mediated by HERC2, possibly via HERC2 interaction with NEURL4. Mg(2+) is required as a cofactor. In terms of processing, phosphorylated at Ser-189 by PAK1, PAK2 and PAK3 resulting in catalytic activation. Phosphorylated by MAPKAPK5 at other sites. Ubiquitination at Met-1 leads to degradation by the proteasome pathway. In terms of tissue distribution, highest levels within the nervous system, expressed in different tissues, mostly in skeletal muscle.

The protein resides in the cytoplasm. Its subcellular location is the nucleus. The catalysed reaction is L-seryl-[protein] + ATP = O-phospho-L-seryl-[protein] + ADP + H(+). The enzyme catalyses L-threonyl-[protein] + ATP = O-phospho-L-threonyl-[protein] + ADP + H(+). With respect to regulation, activated by phosphorylation at Ser-189. Functionally, atypical MAPK protein. Phosphorylates microtubule-associated protein 2 (MAP2) and MAPKAPK5. The precise role of the complex formed with MAPKAPK5 is still unclear, but the complex follows a complex set of phosphorylation events: upon interaction with atypical MAPKAPK5, ERK3/MAPK6 is phosphorylated at Ser-189 and then mediates phosphorylation and activation of MAPKAPK5, which in turn phosphorylates ERK3/MAPK6. May promote entry in the cell cycle. The protein is Mitogen-activated protein kinase 6 (Mapk6) of Rattus norvegicus (Rat).